Reading from the N-terminus, the 451-residue chain is Phosphoglucosamine mutase (451 aa).

Catalysis depends on S101, which acts as the Phosphoserine intermediate. Mg(2+)-binding residues include S101, D242, D244, and D246. The residue at position 101 (S101) is a Phosphoserine.

The protein belongs to the phosphohexose mutase family. Mg(2+) is required as a cofactor. Activated by phosphorylation.

The enzyme catalyses alpha-D-glucosamine 1-phosphate = D-glucosamine 6-phosphate. In terms of biological role, catalyzes the conversion of glucosamine-6-phosphate to glucosamine-1-phosphate. The protein is Phosphoglucosamine mutase of Beijerinckia indica subsp. indica (strain ATCC 9039 / DSM 1715 / NCIMB 8712).